The sequence spans 288 residues: 4-diphosphocytidyl-2-C-methyl-D-erythritol kinase (288 aa).

K13 is a catalytic residue. An ATP-binding site is contributed by 96–106 (PMGGGIGGGSS). The active site involves D138.

Belongs to the GHMP kinase family. IspE subfamily.

It carries out the reaction 4-CDP-2-C-methyl-D-erythritol + ATP = 4-CDP-2-C-methyl-D-erythritol 2-phosphate + ADP + H(+). The protein operates within isoprenoid biosynthesis; isopentenyl diphosphate biosynthesis via DXP pathway; isopentenyl diphosphate from 1-deoxy-D-xylulose 5-phosphate: step 3/6. Functionally, catalyzes the phosphorylation of the position 2 hydroxy group of 4-diphosphocytidyl-2C-methyl-D-erythritol. This chain is 4-diphosphocytidyl-2-C-methyl-D-erythritol kinase, found in Aliivibrio fischeri (strain MJ11) (Vibrio fischeri).